Reading from the N-terminus, the 64-residue chain is Conotoxin mr5.3 (64 aa).

A signal peptide spans 1–19; the sequence is MRCVPVFVILLLLIASVPS. A propeptide spanning residues 20-48 is cleaved from the precursor; sequence VDAQLKTKDDMPLASSHANVKRTLQILRN. Residues glutamate 56 and glutamate 60 each carry the 4-carboxyglutamate modification.

In terms of processing, contains 2 disulfide bonds that can be either 'C1-C3, C2-C4' or 'C1-C4, C2-C3', since these disulfide connectivities have been observed for conotoxins with cysteine framework V (for examples, see AC P0DQQ7 and AC P81755). As to expression, expressed by the venom duct.

The protein resides in the secreted. This chain is Conotoxin mr5.3, found in Conus marmoreus (Marble cone).